Here is a 261-residue protein sequence, read N- to C-terminus: Cytochrome c oxidase subunit 3 (261 aa).

Over 1–15 (MTHQTHAYHMVNPSP) the chain is Mitochondrial matrix. A helical membrane pass occupies residues 16 to 34 (WPLTGALSALLLTSGLIMW). Residues 35–40 (FHFNSF) are Mitochondrial intermembrane-facing. A helical transmembrane segment spans residues 41-66 (LLVIIGLTCMLLTMYQWWRDIVREGT). Over 67-72 (FQGHHT) the chain is Mitochondrial matrix. The helical transmembrane segment at 73-105 (PVVQKGLRYGMVLFIVSEVFFFLGFFWAFYHSS) threads the bilayer. The Mitochondrial intermembrane portion of the chain corresponds to 106 to 128 (LAPTPELGGCWPPTGIHPLNPLE). Residues 129–152 (VPLLNTSILLASGVSITWAHHSLM) form a helical membrane-spanning segment. Residues 153–155 (EGN) lie on the Mitochondrial matrix side of the membrane. Residues 156 to 183 (RKQMIQALSITILLGIYFTILQASEYYE) traverse the membrane as a helical segment. Over 184 to 190 (SSFTISD) the chain is Mitochondrial intermembrane. Residues 191-223 (GVYGSTFFVATGFHGLHVIIGTTFLIVCLLRQF) traverse the membrane as a helical segment. Topologically, residues 224–232 (NFHFTSTHH) are mitochondrial matrix. Residues 233–256 (FGFEAAAWYWHFVDVVWLFLYVSI) form a helical membrane-spanning segment. Residues 257 to 261 (YWWGS) are Mitochondrial intermembrane-facing.

It belongs to the cytochrome c oxidase subunit 3 family. In terms of assembly, component of the cytochrome c oxidase (complex IV, CIV), a multisubunit enzyme composed of 14 subunits. The complex is composed of a catalytic core of 3 subunits MT-CO1, MT-CO2 and MT-CO3, encoded in the mitochondrial DNA, and 11 supernumerary subunits COX4I, COX5A, COX5B, COX6A, COX6B, COX6C, COX7A, COX7B, COX7C, COX8 and NDUFA4, which are encoded in the nuclear genome. The complex exists as a monomer or a dimer and forms supercomplexes (SCs) in the inner mitochondrial membrane with NADH-ubiquinone oxidoreductase (complex I, CI) and ubiquinol-cytochrome c oxidoreductase (cytochrome b-c1 complex, complex III, CIII), resulting in different assemblies (supercomplex SCI(1)III(2)IV(1) and megacomplex MCI(2)III(2)IV(2)).

It localises to the mitochondrion inner membrane. It carries out the reaction 4 Fe(II)-[cytochrome c] + O2 + 8 H(+)(in) = 4 Fe(III)-[cytochrome c] + 2 H2O + 4 H(+)(out). Functionally, component of the cytochrome c oxidase, the last enzyme in the mitochondrial electron transport chain which drives oxidative phosphorylation. The respiratory chain contains 3 multisubunit complexes succinate dehydrogenase (complex II, CII), ubiquinol-cytochrome c oxidoreductase (cytochrome b-c1 complex, complex III, CIII) and cytochrome c oxidase (complex IV, CIV), that cooperate to transfer electrons derived from NADH and succinate to molecular oxygen, creating an electrochemical gradient over the inner membrane that drives transmembrane transport and the ATP synthase. Cytochrome c oxidase is the component of the respiratory chain that catalyzes the reduction of oxygen to water. Electrons originating from reduced cytochrome c in the intermembrane space (IMS) are transferred via the dinuclear copper A center (CU(A)) of subunit 2 and heme A of subunit 1 to the active site in subunit 1, a binuclear center (BNC) formed by heme A3 and copper B (CU(B)). The BNC reduces molecular oxygen to 2 water molecules using 4 electrons from cytochrome c in the IMS and 4 protons from the mitochondrial matrix. This is Cytochrome c oxidase subunit 3 (MT-CO3) from Osphranter robustus (Wallaroo).